Consider the following 639-residue polypeptide: Complex I assembly factor Egm, mitochondrial (639 aa).

Residues 1-26 (MRPNLFSGASRLLTYSRNGKLLTRGR) constitute a mitochondrion transit peptide. The tract at residues 23 to 65 (TRGRSTKATSSSLDSQHQDAATTEGGRAESVEESPEQQRKLPT) is disordered. Residues 28–43 (TKATSSSLDSQHQDAA) are compositionally biased toward polar residues. Residues 48–65 (GRAESVEESPEQQRKLPT) are compositionally biased toward basic and acidic residues.

It belongs to the acyl-CoA dehydrogenase family. Associates with mitochondrial complex I assembly intermediates during its biogenesis. It depends on FAD as a cofactor.

Its subcellular location is the mitochondrion. In terms of biological role, as part of the MCIA complex, primarily participates in the assembly of the mitochondrial complex I and therefore plays a role in oxidative phosphorylation. This Drosophila melanogaster (Fruit fly) protein is Complex I assembly factor Egm, mitochondrial.